A 415-amino-acid polypeptide reads, in one-letter code: DNA double-strand break repair protein Mre11 (415 aa).

Asp-10, His-12, Asp-51, and Asn-86 together coordinate Mn(2+). His-87 functions as the Proton donor in the catalytic mechanism. His-174, His-208, and His-210 together coordinate Mn(2+).

It belongs to the MRE11/RAD32 family. Homodimer. Forms a heterotetramer composed of two Mre11 subunits and two Rad50 subunits. Mn(2+) serves as cofactor.

Its activity is regulated as follows. Nuclease activity is regulated by Rad50. Part of the Rad50/Mre11 complex, which is involved in the early steps of DNA double-strand break (DSB) repair. The complex may facilitate opening of the processed DNA ends to aid in the recruitment of HerA and NurA. Mre11 binds to DSB ends and has both double-stranded 3'-5' exonuclease activity and single-stranded endonuclease activity. In Pyrococcus abyssi (strain GE5 / Orsay), this protein is DNA double-strand break repair protein Mre11.